The following is a 335-amino-acid chain: Pregnancy-specific beta-1-glycoprotein 11 (335 aa).

Positions 1–34 (MGPLSAPPCTEHIKWKGLLLTALLLNFWNLPTTA) are cleaved as a signal peptide. The region spanning 35-144 (QVMIEAQPPK…TGYFTFTLYL (110 aa)) is the Ig-like V-type domain. 3 N-linked (GlcNAc...) asparagine glycosylation sites follow: N61, N104, and N111. The Cell attachment site signature appears at 127 to 129 (RGD). Ig-like C2-type domains lie at 147–234 (PKPS…VTLN) and 242–317 (PRIF…TSLT). 2 disulfide bridges follow: C169/C217 and C261/C301.

This sequence belongs to the immunoglobulin superfamily. CEA family.

The protein resides in the secreted. This is Pregnancy-specific beta-1-glycoprotein 11 (PSG11) from Homo sapiens (Human).